A 32-amino-acid chain; its full sequence is Periplasmic [NiFe] hydrogenase small subunit (32 aa).

Positions 17 and 20 each coordinate [4Fe-4S] cluster.

It belongs to the [NiFe]/[NiFeSe] hydrogenase small subunit family. As to quaternary structure, heterodimer of a large and a small subunit. [3Fe-4S] cluster serves as cofactor. [4Fe-4S] cluster is required as a cofactor.

Its subcellular location is the periplasm. It carries out the reaction 2 Fe(III)-[cytochrome c3] + H2 = 2 Fe(II)-[cytochrome c3] + 2 H(+). The chain is Periplasmic [NiFe] hydrogenase small subunit (hydA) from Desulfovibrio multispirans.